A 1761-amino-acid polypeptide reads, in one-letter code: Probable serine/threonine-protein kinase DDB_G0282963 (1761 aa).

12 disordered regions span residues 18–47 (PQQQ…QQQQ), 60–269 (QQQQ…SNKL), 322–458 (SISN…SDFN), 545–717 (QNSS…KSSQ), 749–783 (LKNS…TISQ), 798–830 (AFYN…STSA), 842–956 (TTQI…KSVF), 972–997 (NSHH…EVPT), 1081–1151 (ITSA…CNVN), 1179–1305 (KNNC…PSKQ), 1318–1343 (ALDS…GTPT), and 1355–1459 (QHSR…ECWK). Composition is skewed to low complexity over residues 19-47 (QQQQ…QQQQ), 60-85 (QQQQ…SNEI), 92-105 (NITN…IISL), and 112-237 (ALNS…NNNN). A compositionally biased stretch (polar residues) spans 238-256 (KQMTPPTFKNNLQVKHQPQ). Low complexity-rich tracts occupy residues 257–269 (SSSG…SNKL), 322–341 (SISN…TNTT), 348–451 (GSIG…NNGV), and 546–572 (NSSL…NNNI). The segment covering 573–582 (MAGSTSSVIY) has biased composition (polar residues). Residues 591-627 (NENNNNNINNDNTVCNINNNNNSNNNKSNNSNNSNNS) show a composition bias toward low complexity. The segment covering 633 to 643 (SSDEEPETDSD) has biased composition (acidic residues). Composition is skewed to low complexity over residues 674 to 697 (NNTN…NNNT), 759 to 778 (PILS…NNSN), 805 to 824 (NNNN…NNNN), 847 to 885 (TSDI…YNNY), 902 to 956 (TKMS…KSVF), 979 to 990 (SGNNSSNSNNNN), 1081 to 1149 (ITSA…CTCN), and 1180 to 1262 (NNCT…SNNN). The span at 1263-1273 (NHHHHHHHHHN) shows a compositional bias: basic residues. 4 stretches are compositionally biased toward low complexity: residues 1288–1303 (SSSS…SSPS), 1320–1338 (DSTN…TSSN), 1359–1386 (NNSS…NNNN), and 1393–1454 (SNST…MNSN). A Protein kinase domain is found at 1476 to 1744 (LFLIKKIGAG…AITSLYDDYI (269 aa)). ATP-binding positions include 1482–1490 (IGAGSFSKV) and Lys-1503. Asp-1597 acts as the Proton acceptor in catalysis.

Belongs to the protein kinase superfamily. TKL Ser/Thr protein kinase family.

The enzyme catalyses L-seryl-[protein] + ATP = O-phospho-L-seryl-[protein] + ADP + H(+). It catalyses the reaction L-threonyl-[protein] + ATP = O-phospho-L-threonyl-[protein] + ADP + H(+). The sequence is that of Probable serine/threonine-protein kinase DDB_G0282963 from Dictyostelium discoideum (Social amoeba).